The following is a 65-amino-acid chain: Toxin NaTx-22 (65 aa).

The region spanning 1–64 (KDGYPVIKTT…TYPIPGKTCK (64 aa)) is the LCN-type CS-alpha/beta domain. 4 disulfides stabilise this stretch: cysteine 12–cysteine 63, cysteine 16–cysteine 39, cysteine 25–cysteine 44, and cysteine 29–cysteine 46.

It belongs to the long (4 C-C) scorpion toxin superfamily. Sodium channel inhibitor family. As to expression, expressed by the venom gland.

The protein localises to the secreted. Functionally, probable sodium channel inhibitor. The sequence is that of Toxin NaTx-22 from Centruroides sculpturatus (Arizona bark scorpion).